Here is a 214-residue protein sequence, read N- to C-terminus: Octanoyltransferase (214 aa).

The BPL/LPL catalytic domain occupies 29-214 (STTPDEIWIL…EHLQKQLMPT (186 aa)). Substrate is bound by residues 69–76 (RGGEITYH), 146–148 (ALG), and 159–161 (GLA). The Acyl-thioester intermediate role is filled by cysteine 177.

This sequence belongs to the LipB family.

It localises to the cytoplasm. It carries out the reaction octanoyl-[ACP] + L-lysyl-[protein] = N(6)-octanoyl-L-lysyl-[protein] + holo-[ACP] + H(+). It participates in protein modification; protein lipoylation via endogenous pathway; protein N(6)-(lipoyl)lysine from octanoyl-[acyl-carrier-protein]: step 1/2. Its function is as follows. Catalyzes the transfer of endogenously produced octanoic acid from octanoyl-acyl-carrier-protein onto the lipoyl domains of lipoate-dependent enzymes. Lipoyl-ACP can also act as a substrate although octanoyl-ACP is likely to be the physiological substrate. This Polynucleobacter asymbioticus (strain DSM 18221 / CIP 109841 / QLW-P1DMWA-1) (Polynucleobacter necessarius subsp. asymbioticus) protein is Octanoyltransferase.